The chain runs to 426 residues: Branched-chain amino acid permease BrnQ (426 aa).

Helical transmembrane passes span 11-31 (LMLFSMFFGAGNLIFPPMLGL), 41-61 (ILGFLATSVLLPVLAIIAVVL), 76-96 (IFGLVFPIAAYLSIGAFYALP), 111-131 (NALYSGLFNFVFFAVALALSW), 140-160 (LGKWLTPALLTLIVVLVVLSV), 186-206 (GYMTMDAIAALAFGIVVISAF), 219-239 (VVSAFIAGILLALVYLGLGSI), 268-288 (IMFVAILILACMTTAVGLISA), 296-316 (LLPGVKYHVWATVFALISFGV), 324-344 (VLAVAAPVISFIYPSAITLVF), 358-378 (TYLFGIWTAVVWALFMSIPAL), and 390-410 (MSLGWVVPVLVASAIGLAIDW).

It belongs to the branched chain amino acid transporter family.

It localises to the cell membrane. Its function is as follows. Branched chain amino acid transport system, which transports isoleucine. This is Branched-chain amino acid permease BrnQ from Corynebacterium glutamicum (strain ATCC 13032 / DSM 20300 / JCM 1318 / BCRC 11384 / CCUG 27702 / LMG 3730 / NBRC 12168 / NCIMB 10025 / NRRL B-2784 / 534).